We begin with the raw amino-acid sequence, 101 residues long: NAD(P)H-quinone oxidoreductase subunit 4L, chloroplastic (101 aa).

The next 3 membrane-spanning stretches (helical) occupy residues 2 to 22 (MLEH…YGLI), 32 to 52 (MCLE…SDFF), and 61 to 81 (IFSI…LAIV).

The protein belongs to the complex I subunit 4L family. NDH is composed of at least 16 different subunits, 5 of which are encoded in the nucleus.

Its subcellular location is the plastid. The protein localises to the chloroplast thylakoid membrane. It carries out the reaction a plastoquinone + NADH + (n+1) H(+)(in) = a plastoquinol + NAD(+) + n H(+)(out). The catalysed reaction is a plastoquinone + NADPH + (n+1) H(+)(in) = a plastoquinol + NADP(+) + n H(+)(out). In terms of biological role, NDH shuttles electrons from NAD(P)H:plastoquinone, via FMN and iron-sulfur (Fe-S) centers, to quinones in the photosynthetic chain and possibly in a chloroplast respiratory chain. The immediate electron acceptor for the enzyme in this species is believed to be plastoquinone. Couples the redox reaction to proton translocation, and thus conserves the redox energy in a proton gradient. The protein is NAD(P)H-quinone oxidoreductase subunit 4L, chloroplastic of Cicer arietinum (Chickpea).